The chain runs to 938 residues: Isoleucine--tRNA ligase (938 aa).

Residues 58 to 68 (PYANGSIHIGH) carry the 'HIGH' region motif. K183 carries the N6-acetyllysine modification. An L-isoleucyl-5'-AMP-binding site is contributed by E561. The short motif at 602–606 (KMSKS) is the 'KMSKS' region element. K605 contacts ATP. Residues C901, C904, C921, and C924 each coordinate Zn(2+).

This sequence belongs to the class-I aminoacyl-tRNA synthetase family. IleS type 1 subfamily. As to quaternary structure, monomer. It depends on Zn(2+) as a cofactor.

It is found in the cytoplasm. The catalysed reaction is tRNA(Ile) + L-isoleucine + ATP = L-isoleucyl-tRNA(Ile) + AMP + diphosphate. Functionally, catalyzes the attachment of isoleucine to tRNA(Ile). As IleRS can inadvertently accommodate and process structurally similar amino acids such as valine, to avoid such errors it has two additional distinct tRNA(Ile)-dependent editing activities. One activity is designated as 'pretransfer' editing and involves the hydrolysis of activated Val-AMP. The other activity is designated 'posttransfer' editing and involves deacylation of mischarged Val-tRNA(Ile). This is Isoleucine--tRNA ligase from Escherichia coli (strain 55989 / EAEC).